Reading from the N-terminus, the 417-residue chain is Serine hydroxymethyltransferase (417 aa).

(6S)-5,6,7,8-tetrahydrofolate-binding positions include L121 and 125 to 127 (GHL). K229 carries the N6-(pyridoxal phosphate)lysine modification. Position 355–357 (355–357 (SPF)) interacts with (6S)-5,6,7,8-tetrahydrofolate.

It belongs to the SHMT family. Homodimer. Pyridoxal 5'-phosphate serves as cofactor.

It is found in the cytoplasm. The enzyme catalyses (6R)-5,10-methylene-5,6,7,8-tetrahydrofolate + glycine + H2O = (6S)-5,6,7,8-tetrahydrofolate + L-serine. Its pathway is one-carbon metabolism; tetrahydrofolate interconversion. The protein operates within amino-acid biosynthesis; glycine biosynthesis; glycine from L-serine: step 1/1. Catalyzes the reversible interconversion of serine and glycine with tetrahydrofolate (THF) serving as the one-carbon carrier. This reaction serves as the major source of one-carbon groups required for the biosynthesis of purines, thymidylate, methionine, and other important biomolecules. Also exhibits THF-independent aldolase activity toward beta-hydroxyamino acids, producing glycine and aldehydes, via a retro-aldol mechanism. The protein is Serine hydroxymethyltransferase of Salmonella arizonae (strain ATCC BAA-731 / CDC346-86 / RSK2980).